Here is a 300-residue protein sequence, read N- to C-terminus: Zinc finger CCCH domain-containing protein 14 (300 aa).

The disordered stretch occupies residues 1-38 (MEVGGRKRGKPDGANGAGGKRARESESFQTGVGSKSKP). 2 consecutive C3H1-type zinc fingers follow at residues 33–61 (GSKS…HHFP) and 99–127 (TVKT…HGER). Residues 170–234 (SATAKISVDA…DQIKNASAMV (65 aa)) form the KH domain. The tract at residues 243–262 (GGAPPQGKKPVGGSHRGGGP) is disordered. A C3H1-type 3 zinc finger spans residues 265-292 (NFKTKLCENFTKGSCTFGDRCHFAHGEN).

The polypeptide is Zinc finger CCCH domain-containing protein 14 (Oryza sativa subsp. japonica (Rice)).